Reading from the N-terminus, the 528-residue chain is Glutamyl-tRNA(Gln) amidotransferase subunit B, mitochondrial (528 aa).

The protein belongs to the GatB/GatE family. GatB subfamily. In terms of assembly, subunit of the heterotrimeric GatFAB amidotransferase (AdT) complex, composed of A, B and F subunits.

The protein resides in the mitochondrion. The catalysed reaction is L-glutamyl-tRNA(Gln) + L-glutamine + ATP + H2O = L-glutaminyl-tRNA(Gln) + L-glutamate + ADP + phosphate + H(+). Allows the formation of correctly charged Gln-tRNA(Gln) through the transamidation of misacylated Glu-tRNA(Gln) in the mitochondria. The reaction takes place in the presence of glutamine and ATP through an activated gamma-phospho-Glu-tRNA(Gln). This is Glutamyl-tRNA(Gln) amidotransferase subunit B, mitochondrial from Clavispora lusitaniae (strain ATCC 42720) (Yeast).